Here is a 156-residue protein sequence, read N- to C-terminus: UPF0587 protein (156 aa).

The Zn(2+) site is built by cysteine 32, cysteine 35, cysteine 64, and cysteine 67.

This sequence belongs to the UPF0587 family.

The protein is UPF0587 protein of Dictyostelium discoideum (Social amoeba).